The chain runs to 420 residues: Ammonium transporter Amt2 (420 aa).

11 helical membrane-spanning segments follow: residues 34–54, 71–91, 120–140, 149–169, 180–200, 220–240, 250–270, 273–293, 295–315, 339–359, and 365–385; these read VFFL…FAML, NMVD…ILCS, SWFF…GGVA, VLIS…LGPW, AGSL…IAAL, IPMA…FNVG, GLVC…ALIA, NDVL…CSGT, VVSP…VPIV, VIGA…AGGV, and IIGA…LAKI.

This sequence belongs to the ammonia transporter channel (TC 1.A.11.2) family. As to quaternary structure, homotrimer. Interacts and forms a complex with GlnK2.

It localises to the cell membrane. Its function is as follows. Involved in the uptake of ammonium/ammonia (NH(4)(+)/NH(3)). Transport is electrogenic. The protein is Ammonium transporter Amt2 of Methanocaldococcus jannaschii (strain ATCC 43067 / DSM 2661 / JAL-1 / JCM 10045 / NBRC 100440) (Methanococcus jannaschii).